The chain runs to 699 residues: Methylcrotonoyl-CoA carboxylase subunit alpha, mitochondrial (699 aa).

One can recognise a Biotin carboxylation domain in the interval Ile30–Glu475. Positions 144, 228, and 263 each coordinate ATP. The ATP-grasp domain occupies Lys148–Glu345. The active site involves Arg320. Positions Lys624–Val699 constitute a Biotinyl-binding domain. Lys665 is subject to N6-biotinyllysine.

Probably a dodecamer composed of six biotin-containing alpha subunits and six beta subunits. It depends on Mn(2+) as a cofactor. Biotin is required as a cofactor.

It localises to the mitochondrion matrix. It catalyses the reaction 3-methylbut-2-enoyl-CoA + hydrogencarbonate + ATP = 3-methyl-(2E)-glutaconyl-CoA + ADP + phosphate + H(+). It participates in amino-acid degradation; L-leucine degradation; (S)-3-hydroxy-3-methylglutaryl-CoA from 3-isovaleryl-CoA: step 2/3. In terms of biological role, biotin-attachment subunit of the 3-methylcrotonyl-CoA carboxylase, an enzyme that catalyzes the conversion of 3-methylcrotonyl-CoA to 3-methylglutaconyl-CoA, a critical step for leucine and isovaleric acid catabolism. The protein is Methylcrotonoyl-CoA carboxylase subunit alpha, mitochondrial (mccA) of Dictyostelium discoideum (Social amoeba).